The following is a 171-amino-acid chain: MDIRSHIRTVPDFPKPGILFYDISTLLAHAEAWKATVEKLAEAVAPHKPDLLVGIESRGFLVAAPLSLALGCGFAMVRKKGKLPGQTIRYTYDLEYGTDTVEIQADAIAPGQRVVVLDDLLATGGTMAAAIHLLRSVGADVTAAAFIMELAFLNGRDRLDVPAEVLISYES.

It belongs to the purine/pyrimidine phosphoribosyltransferase family. Homodimer.

It localises to the cytoplasm. The catalysed reaction is AMP + diphosphate = 5-phospho-alpha-D-ribose 1-diphosphate + adenine. It functions in the pathway purine metabolism; AMP biosynthesis via salvage pathway; AMP from adenine: step 1/1. In terms of biological role, catalyzes a salvage reaction resulting in the formation of AMP, that is energically less costly than de novo synthesis. The protein is Adenine phosphoribosyltransferase of Rhodospirillum centenum (strain ATCC 51521 / SW).